A 202-amino-acid chain; its full sequence is MKMKSLFVAMITFFSAAPFAHWQPIGNAEYTWGPFHVYTIGLFSETGTYQENERPLMLSFKYEKPIEGKNFAITLIKEIETLKLNDGDTQSWLKEMQATFPDFSPNDILNYIALPDRGYFVLNDTVLEHDFDAKFNQAFIGIWLAPNSTFVKLQPQLLGKTKSNHEATEFYLKPEIESFDEQDSTPELPPNYLLDSQKKSQG.

Residues 179 to 202 form a disordered region; sequence FDEQDSTPELPPNYLLDSQKKSQG.

This is an uncharacterized protein from Haemophilus influenzae (strain ATCC 51907 / DSM 11121 / KW20 / Rd).